A 366-amino-acid chain; its full sequence is Mitochondrial division protein fszB (366 aa).

Residues 70–74, 157–159, E190, and D238 contribute to the GTP site; these read GGGGN and GTG.

It belongs to the FtsZ family.

It localises to the mitochondrion. In terms of biological role, probably involved in mitochondrion division process. Binds to and hydrolyzes GTP. In Dictyostelium discoideum (Social amoeba), this protein is Mitochondrial division protein fszB (fszB).